The following is a 1065-amino-acid chain: Probable importin-7 homolog (1065 aa).

The 74-residue stretch at 25–98 (AEAQLQQIKV…KENLIDLLVH (74 aa)) folds into the Importin N-terminal domain. Positions 958 to 996 (ENGGDLGEDEGDNFDDQNDDDDQDSEEDLFEDEDTPDFE) are disordered. The segment covering 963 to 996 (LGEDEGDNFDDQNDDDDQDSEEDLFEDEDTPDFE) has biased composition (acidic residues).

Belongs to the importin beta family.

The protein resides in the cytoplasm. Its subcellular location is the nucleus. Its function is as follows. May function in nuclear protein import. This chain is Probable importin-7 homolog, found in Dictyostelium discoideum (Social amoeba).